Consider the following 187-residue polypeptide: MIKLIVGLGNPGPQYAVTRHNAGFMIVDNLAVKLGVNFNAYKNLGEYVKTTIGGQDVFLAKPLTFMNLSGRMVTHLAGFYKIKPQEILVCFDDISINLGAVRIRKDGSAGGQNGMKNIIELFGTQDIPRLRFGVGPKPERFDSADYVLSKFSKSDEKLLNESIEAAVEAAESCVKDGLERAMNKFNK.

Tyrosine 15 provides a ligand contact to tRNA. Catalysis depends on histidine 20, which acts as the Proton acceptor. TRNA is bound by residues phenylalanine 65, asparagine 67, and asparagine 113.

The protein belongs to the PTH family. Monomer.

The protein localises to the cytoplasm. The enzyme catalyses an N-acyl-L-alpha-aminoacyl-tRNA + H2O = an N-acyl-L-amino acid + a tRNA + H(+). Hydrolyzes ribosome-free peptidyl-tRNAs (with 1 or more amino acids incorporated), which drop off the ribosome during protein synthesis, or as a result of ribosome stalling. Its function is as follows. Catalyzes the release of premature peptidyl moieties from peptidyl-tRNA molecules trapped in stalled 50S ribosomal subunits, and thus maintains levels of free tRNAs and 50S ribosomes. The protein is Peptidyl-tRNA hydrolase of Elusimicrobium minutum (strain Pei191).